Consider the following 179-residue polypeptide: Cell division protein SepF (179 aa).

Positions 18–57 (EDSTVPYEKGNEPVFTPVNSSQEPDLPMNQPSQSAGAKDS) are disordered. A compositionally biased stretch (polar residues) spans 34-57 (PVNSSQEPDLPMNQPSQSAGAKDS).

Belongs to the SepF family. Homodimer. Interacts with FtsZ.

It localises to the cytoplasm. Functionally, cell division protein that is part of the divisome complex and is recruited early to the Z-ring. Probably stimulates Z-ring formation, perhaps through the cross-linking of FtsZ protofilaments. Its function overlaps with FtsA. This is Cell division protein SepF from Streptococcus pneumoniae (strain Hungary19A-6).